The following is a 545-amino-acid chain: Membrane protein insertase YidC (545 aa).

A helical transmembrane segment spans residues 6-26 (FVLFVFFIFLSFLLWEQWQID). The tract at residues 32–69 (QAVAQTDGASRPAGDLPQRPSDDESDVTVHTEAPTQEG) is disordered. Transmembrane regions (helical) follow at residues 354–374 (FFNNWGWAIIFVTLVIKALFF), 425–445 (GGCLPILVQIPVFISLYWVLV), 462–482 (LSSKDPYFVLPLIMGVSMFIQ), and 500–520 (FFPLVFTVFFLFFPSGLVLYW).

The protein belongs to the OXA1/ALB3/YidC family. Type 1 subfamily. Interacts with the Sec translocase complex via SecD. Specifically interacts with transmembrane segments of nascent integral membrane proteins during membrane integration.

The protein resides in the cell inner membrane. In terms of biological role, required for the insertion and/or proper folding and/or complex formation of integral membrane proteins into the membrane. Involved in integration of membrane proteins that insert both dependently and independently of the Sec translocase complex, as well as at least some lipoproteins. Aids folding of multispanning membrane proteins. In Methylococcus capsulatus (strain ATCC 33009 / NCIMB 11132 / Bath), this protein is Membrane protein insertase YidC.